The chain runs to 319 residues: MISEKILRHIFQYRRLLSDTEPCAKEPCSICLAPHLPKIQSFIENNEPIHFILPAFPAKSPNPQKVLGPMPDMGERVALQFLQNLCNQISEIYASGAKITICSDGRVFTDLVAITDENVSLYRQGIQRLLNEINADAIDTFCLENVFTGMSFDQMRKTLVKQYAQPIESIQERVNSEDKHRQFFKGIYHLLFDDYLVLYPDKSREQIEVECNLRAYEVIQRSNAWTTLVGQHFPQSLRLSIHPQDYHSNKIGIHMIKTSDQWGTPWHNAPMFNGKEFLLMKRKHIEDIGASLVWHNDHPSHYILSEQVSQALVTLDNKS.

Belongs to the isocyanide synthase family.

It catalyses the reaction D-ribulose 5-phosphate + L-tryptophan = (2S)-3-(1H-indol-3-yl)-2-isocyanopropanoate + hydroxyacetone + formaldehyde + phosphate + H2O + H(+). Functionally, involved in the biosynthesis of ambiguines, a family of hapalindole-type alkaloids. Responsible for the synthesis of the isonitrile group on tryptophan using ribulose 5-phosphate as the source of the carbon atom. This Fischerella ambigua (strain UTEX 1903) protein is L-tryptophan isonitrile synthase AmbI1.